Consider the following 152-residue polypeptide: UPF0266 membrane protein KPN78578_23010 (152 aa).

The next 3 helical transmembrane spans lie at 6–26 (LVII…QFIM), 45–65 (VDGM…ITQH), and 67–87 (TAIT…LFWI).

Belongs to the UPF0266 family.

The protein resides in the cell inner membrane. The sequence is that of UPF0266 membrane protein KPN78578_23010 from Klebsiella pneumoniae subsp. pneumoniae (strain ATCC 700721 / MGH 78578).